The following is a 238-amino-acid chain: Large ribosomal subunit protein uL2 (238 aa).

A compositionally biased stretch (polar residues) spans 1–11; the sequence is MGKRLISQNRG. 2 disordered regions span residues 1 to 22 and 202 to 223; these read MGKR…APSH and FGGG…APPG.

Belongs to the universal ribosomal protein uL2 family. Part of the 50S ribosomal subunit. Forms a bridge to the 30S subunit in the 70S ribosome.

In terms of biological role, one of the primary rRNA binding proteins. Required for association of the 30S and 50S subunits to form the 70S ribosome, for tRNA binding and peptide bond formation. It has been suggested to have peptidyltransferase activity; this is somewhat controversial. Makes several contacts with the 16S rRNA in the 70S ribosome. The protein is Large ribosomal subunit protein uL2 of Methanosarcina mazei (strain ATCC BAA-159 / DSM 3647 / Goe1 / Go1 / JCM 11833 / OCM 88) (Methanosarcina frisia).